The primary structure comprises 290 residues: 4-diphosphocytidyl-2-C-methyl-D-erythritol kinase (290 aa).

Residue Lys12 is part of the active site. 97-107 (PVASGIGGGSA) is a binding site for ATP. Residue Asp139 is part of the active site.

Belongs to the GHMP kinase family. IspE subfamily.

It catalyses the reaction 4-CDP-2-C-methyl-D-erythritol + ATP = 4-CDP-2-C-methyl-D-erythritol 2-phosphate + ADP + H(+). It participates in isoprenoid biosynthesis; isopentenyl diphosphate biosynthesis via DXP pathway; isopentenyl diphosphate from 1-deoxy-D-xylulose 5-phosphate: step 3/6. Functionally, catalyzes the phosphorylation of the position 2 hydroxy group of 4-diphosphocytidyl-2C-methyl-D-erythritol. The polypeptide is 4-diphosphocytidyl-2-C-methyl-D-erythritol kinase (Parvibaculum lavamentivorans (strain DS-1 / DSM 13023 / NCIMB 13966)).